The sequence spans 153 residues: Cytochrome c-type biogenesis protein CcmE (153 aa).

Residues 1–8 are Cytoplasmic-facing; the sequence is MTPVQRRR. Residues 9–29 traverse the membrane as a helical; Signal-anchor for type II membrane protein segment; that stretch reads LVWVLLALLASGLATALVAMA. Over 30 to 153 the chain is Periplasmic; the sequence is LERNIAYLYT…DVPVTAPEVR (124 aa). Heme is bound by residues His-123 and Tyr-127.

This sequence belongs to the CcmE/CycJ family.

The protein localises to the cell inner membrane. Its function is as follows. Heme chaperone required for the biogenesis of c-type cytochromes. Transiently binds heme delivered by CcmC and transfers the heme to apo-cytochromes in a process facilitated by CcmF and CcmH. The sequence is that of Cytochrome c-type biogenesis protein CcmE from Stenotrophomonas maltophilia (strain R551-3).